The primary structure comprises 53 residues: Ribulose bisphosphate carboxylase large chain (53 aa).

A propeptide spanning residues 1 to 2 is cleaved from the precursor; it reads MS. P3 carries the N-acetylproline modification. Residue K14 is modified to N6,N6,N6-trimethyllysine.

This sequence belongs to the RuBisCO large chain family. Type I subfamily. In terms of assembly, heterohexadecamer of 8 large chains and 8 small chains.

Its subcellular location is the plastid. It is found in the chloroplast. The enzyme catalyses 2 (2R)-3-phosphoglycerate + 2 H(+) = D-ribulose 1,5-bisphosphate + CO2 + H2O. It catalyses the reaction D-ribulose 1,5-bisphosphate + O2 = 2-phosphoglycolate + (2R)-3-phosphoglycerate + 2 H(+). Its function is as follows. RuBisCO catalyzes two reactions: the carboxylation of D-ribulose 1,5-bisphosphate, the primary event in carbon dioxide fixation, as well as the oxidative fragmentation of the pentose substrate in the photorespiration process. Both reactions occur simultaneously and in competition at the same active site. In Malus domestica (Apple), this protein is Ribulose bisphosphate carboxylase large chain (rbcL).